Reading from the N-terminus, the 485-residue chain is Membrane-bound lytic murein transglycosylase F (485 aa).

A signal peptide spans 1 to 29; that stretch reads MFAHTALRQRCAKWLFATGLFLLLGACVE. The tract at residues 30 to 267 is non-LT domain; sequence KPSTLERVKE…RLKDRYYGHV (238 aa). The segment at 268 to 485 is LT domain; the sequence is DVLGYVGAYT…DKPADQSPPM (218 aa). Glu314 is a catalytic residue. The segment at 465–485 is disordered; that stretch reads EGNLHVPGVNKDKPADQSPPM.

This sequence in the N-terminal section; belongs to the bacterial solute-binding protein 3 family. It in the C-terminal section; belongs to the transglycosylase Slt family.

The protein localises to the cell outer membrane. The enzyme catalyses Exolytic cleavage of the (1-&gt;4)-beta-glycosidic linkage between N-acetylmuramic acid (MurNAc) and N-acetylglucosamine (GlcNAc) residues in peptidoglycan, from either the reducing or the non-reducing ends of the peptidoglycan chains, with concomitant formation of a 1,6-anhydrobond in the MurNAc residue.. Murein-degrading enzyme that degrades murein glycan strands and insoluble, high-molecular weight murein sacculi, with the concomitant formation of a 1,6-anhydromuramoyl product. Lytic transglycosylases (LTs) play an integral role in the metabolism of the peptidoglycan (PG) sacculus. Their lytic action creates space within the PG sacculus to allow for its expansion as well as for the insertion of various structures such as secretion systems and flagella. This chain is Membrane-bound lytic murein transglycosylase F, found in Pseudomonas putida (strain GB-1).